The following is an 829-amino-acid chain: pre-rRNA 2'-O-ribose RNA methyltransferase FTSJ3 (829 aa).

Positions 56, 58, 76, 92, and 117 each coordinate S-adenosyl-L-methionine. Lys157 (proton acceptor) is an active-site residue. The tract at residues 332 to 367 is disordered; it reads ISLSSEEEGDEEESAAETKQASEEEEEREEEEQLNR. Residues Ser333, Ser335, Ser336, Ser345, and Ser353 each carry the phosphoserine modification. Positions 336 to 346 are enriched in acidic residues; the sequence is SEEEGDEEESA. The segment covering 354-363 has biased composition (acidic residues); that stretch reads EEEEEREEEE. Residue Arg389 is modified to Citrulline. Disordered stretches follow at residues 443-508 and 528-634; these read FLSD…PLLV and DGFS…GFEV. Over residues 456–473 the composition is skewed to acidic residues; it reads DAEDDDDTSLESDLDPEE. Residues Ser531 and Ser544 each carry the phosphoserine modification. Residue Lys570 forms a Glycyl lysine isopeptide (Lys-Gly) (interchain with G-Cter in SUMO2) linkage. A Phosphoserine modification is found at Ser575. Glycyl lysine isopeptide (Lys-Gly) (interchain with G-Cter in SUMO2) cross-links involve residues Lys626 and Lys642. Ser659 bears the Phosphoserine mark. Lys661 is covalently cross-linked (Glycyl lysine isopeptide (Lys-Gly) (interchain with G-Cter in SUMO2)). Ser671 bears the Phosphoserine mark. A Glycyl lysine isopeptide (Lys-Gly) (interchain with G-Cter in SUMO2) cross-link involves residue Lys693. Positions 722 to 760 form a coiled coil; sequence IKKVAEAKARKKRRMLKKLEQTKKKAEAVVNTVDISERE. The residue at position 766 (Arg766) is a Citrulline. The segment covering 794 to 804 has biased composition (basic residues); that stretch reads VRRPAGVRGHF. Residues 794–829 are disordered; sequence VRRPAGVRGHFKVVDSRMKKDQRAQRKEQKRNHRRK. Over residues 805-820 the composition is skewed to basic and acidic residues; it reads KVVDSRMKKDQRAQRK.

It belongs to the class I-like SAM-binding methyltransferase superfamily. RNA methyltransferase RlmE family. SPB1 subfamily. Interacts with NIP7. In terms of processing, citrullinated by PADI4.

The protein localises to the nucleus. It is found in the nucleolus. It catalyses the reaction a ribonucleotide in rRNA + S-adenosyl-L-methionine = a 2'-O-methylribonucleotide in rRNA + S-adenosyl-L-homocysteine + H(+). Functionally, RNA 2'-O-methyltransferase involved in the processing of the 34S pre-rRNA to 18S rRNA and in 40S ribosomal subunit formation. The polypeptide is pre-rRNA 2'-O-ribose RNA methyltransferase FTSJ3 (Ftsj3) (Rattus norvegicus (Rat)).